The sequence spans 202 residues: Stress enhanced protein 2, chloroplastic (202 aa).

A chloroplast-targeting transit peptide spans 1 to 60; that stretch reads MAMATRAIRYQLPSPRFRAPRCESSEPIKQIQIQQRPRGGDLAENGKIVLQPRLCTLRSY. The next 2 helical transmembrane spans lie at 111–131 and 142–162; these read LAMIVFAVTVTEEIVTGNSLF and AIGAGLAAMGCAAMFAWLTIS.

Belongs to the ELIP/psbS family.

The protein localises to the plastid. It localises to the chloroplast thylakoid membrane. May be involved in non-photochemical quenching, a process that maintains the balance between dissipation and utilization of light energy to minimize generation of oxidizing molecules, thereby protecting the plant against photo-oxidative damage. May play a photoprotective role in the thylakoid membrane in response to light stress. The sequence is that of Stress enhanced protein 2, chloroplastic from Arabidopsis thaliana (Mouse-ear cress).